The sequence spans 171 residues: 3-hydroxydecanoyl-[acyl-carrier-protein] dehydratase (171 aa).

Residue His-70 is part of the active site.

It belongs to the thioester dehydratase family. FabA subfamily. As to quaternary structure, homodimer.

It is found in the cytoplasm. The enzyme catalyses a (3R)-hydroxyacyl-[ACP] = a (2E)-enoyl-[ACP] + H2O. It carries out the reaction (3R)-hydroxydecanoyl-[ACP] = (2E)-decenoyl-[ACP] + H2O. It catalyses the reaction (2E)-decenoyl-[ACP] = (3Z)-decenoyl-[ACP]. It functions in the pathway lipid metabolism; fatty acid biosynthesis. In terms of biological role, necessary for the introduction of cis unsaturation into fatty acids. Catalyzes the dehydration of (3R)-3-hydroxydecanoyl-ACP to E-(2)-decenoyl-ACP and then its isomerization to Z-(3)-decenoyl-ACP. Can catalyze the dehydratase reaction for beta-hydroxyacyl-ACPs with saturated chain lengths up to 16:0, being most active on intermediate chain length. The sequence is that of 3-hydroxydecanoyl-[acyl-carrier-protein] dehydratase from Xanthomonas euvesicatoria pv. vesicatoria (strain 85-10) (Xanthomonas campestris pv. vesicatoria).